Consider the following 126-residue polypeptide: Adenosine 5'-monophosphoramidase HINT1 (126 aa).

N-acetylalanine is present on A2. The HIT domain maps to 18 to 126 (IFGKIIRKEI…GGRQMNWPPG (109 aa)). Residues K21 and K30 each carry the N6-acetyllysine modification. 43-44 (DI) contributes to the AMP binding site. Phosphoserine is present on residues S45 and S72. AMP contacts are provided by residues N99, 105–107 (GQS), and 112–114 (HLH). A Histidine triad motif motif is present at residues 110 to 114 (HVHLH). The active-site Tele-AMP-histidine intermediate is the H112.

Belongs to the HINT family. Homodimer. Interacts with CDK7. Interacts with RUVBL1 and RUVBL2 and is associated with the LEF1/TCF1-CTNNB1 complex and with a KAT5 histone acetyltransferase complex. Identified in a complex with MITF and CTNNB1. Interacts with CDC34 and RBX1, and is part of a SCF (SKP2-CUL1-F-box protein) E3 ubiquitin-protein ligase complex. Interacts with SUMO1, SUMO2 and RGS17. Interacts with the Ten-1 ICD form of TENM1. Interacts with CALM1; interaction increases in the presence of calcium ions. As to expression, widely expressed.

The protein resides in the cytoplasm. It is found in the nucleus. The catalysed reaction is adenosine 5'-phosphoramidate + H2O = AMP + NH4(+). Functionally, exhibits adenosine 5'-monophosphoramidase activity, hydrolyzing purine nucleotide phosphoramidates with a single phosphate group such as adenosine 5'monophosphoramidate (AMP-NH2) to yield AMP and NH2. Hydrolyzes adenosine 5'monophosphomorpholidate (AMP-morpholidate) and guanosine 5'monophosphomorpholidate (GMP-morpholidate). Hydrolyzes lysyl-AMP (AMP-N-epsilon-(N-alpha-acetyl lysine methyl ester)) generated by lysine tRNA ligase. Hydrolyzes Met-AMP, His-AMP, Asp-AMP, lysyl-GMP (GMP-N-epsilon-(N-alpha-acetyl lysine methyl ester)) and AMP-N-alanine methyl ester. Can also convert adenosine 5'-O-phosphorothioate and guanosine 5'-O-phosphorothioate to the corresponding nucleoside 5'-O-phosphates with concomitant release of hydrogen sulfide. In addition, functions as a scaffolding protein that modulates transcriptional activation by the LEF1/TCF1-CTNNB1 complex and by the complex formed with MITF and CTNNB1. Modulates p53/TP53 levels and p53/TP53-mediated apoptosis. Modulates proteasomal degradation of target proteins by the SCF (SKP2-CUL1-F-box protein) E3 ubiquitin-protein ligase complex. Also exhibits SUMO-specific isopeptidase activity, deconjugating SUMO1 from RANGAP1 and RGS17. This Oryctolagus cuniculus (Rabbit) protein is Adenosine 5'-monophosphoramidase HINT1 (HINT1).